A 455-amino-acid polypeptide reads, in one-letter code: Serine--tRNA ligase (455 aa).

Residue 252–254 (TAE) participates in L-serine binding. Residues 283-285 (RKE) and valine 299 contribute to the ATP site. Glutamate 306 provides a ligand contact to L-serine. 370 to 373 (EVVS) is a binding site for ATP. Residue threonine 406 coordinates L-serine.

Belongs to the class-II aminoacyl-tRNA synthetase family. Type-1 seryl-tRNA synthetase subfamily. Homodimer. The tRNA molecule binds across the dimer.

Its subcellular location is the cytoplasm. It catalyses the reaction tRNA(Ser) + L-serine + ATP = L-seryl-tRNA(Ser) + AMP + diphosphate + H(+). It carries out the reaction tRNA(Sec) + L-serine + ATP = L-seryl-tRNA(Sec) + AMP + diphosphate + H(+). It functions in the pathway aminoacyl-tRNA biosynthesis; selenocysteinyl-tRNA(Sec) biosynthesis; L-seryl-tRNA(Sec) from L-serine and tRNA(Sec): step 1/1. Its function is as follows. Catalyzes the attachment of serine to tRNA(Ser). Is also able to aminoacylate tRNA(Sec) with serine, to form the misacylated tRNA L-seryl-tRNA(Sec), which will be further converted into selenocysteinyl-tRNA(Sec). In Pyrococcus furiosus (strain ATCC 43587 / DSM 3638 / JCM 8422 / Vc1), this protein is Serine--tRNA ligase.